The following is a 100-amino-acid chain: Apolipoprotein C-II (100 aa).

An N-terminal signal peptide occupies residues 1–25 (MDARSLLLLWLLLPLLLLLGCEVQG). Positions 65-73 (AVDETIRDI) are lipid binding. The interval 77–100 (GSAAISTYTGILTDQILTMLQGKQ) is lipoprotein lipase cofactor.

Belongs to the apolipoprotein C2 family. Post-translationally, proapolipoprotein C-II is synthesized as a sialic acid containing glycoprotein which is subsequently desialylated prior to its proteolytic processing. In terms of processing, proapolipoprotein C-II, the major form found in plasma undergoes proteolytic cleavage of its N-terminal hexapeptide to generate apolipoprotein C-II, which occurs as the minor form in plasma. In terms of tissue distribution, liver.

It localises to the secreted. Component of chylomicrons, very low-density lipoproteins (VLDL), low-density lipoproteins (LDL), and high-density lipoproteins (HDL) in plasma. Plays an important role in lipoprotein metabolism as an activator of lipoprotein lipase. Both proapolipoprotein C-II and apolipoprotein C-II can activate lipoprotein lipase. This chain is Apolipoprotein C-II (APOC2), found in Cavia porcellus (Guinea pig).